Here is a 320-residue protein sequence, read N- to C-terminus: GTPase Era (320 aa).

Residues His25 to Lys193 form the Era-type G domain. Residues Gly33–Ser40 form a G1 region. Residue Gly33–Ser40 coordinates GTP. The segment at Gln59–His63 is G2. Residues Asp80–Gly83 form a G3 region. Residues Asp80 to Leu84 and Asn142 to Asp145 each bind GTP. Positions Asn142 to Asp145 are G4. Residues Ile172–Ala174 form a G5 region. Residues Val216–Ser302 form the KH type-2 domain.

It belongs to the TRAFAC class TrmE-Era-EngA-EngB-Septin-like GTPase superfamily. Era GTPase family. In terms of assembly, monomer.

It localises to the cytoplasm. Its subcellular location is the cell inner membrane. In terms of biological role, an essential GTPase that binds both GDP and GTP, with rapid nucleotide exchange. Plays a role in 16S rRNA processing and 30S ribosomal subunit biogenesis and possibly also in cell cycle regulation and energy metabolism. This Vibrio vulnificus (strain CMCP6) protein is GTPase Era.